Reading from the N-terminus, the 427-residue chain is Glucose-1-phosphate adenylyltransferase (427 aa).

AMP is bound by residues Arg40, His46, and Arg52. Tyr114 contributes to the alpha-D-glucose 1-phosphate binding site. Position 130 (Arg130) interacts with AMP. Alpha-D-glucose 1-phosphate contacts are provided by residues Gly179, 194–195 (EK), and Ser212. Arg386 serves as a coordination point for AMP.

It belongs to the bacterial/plant glucose-1-phosphate adenylyltransferase family. Homotetramer.

It carries out the reaction alpha-D-glucose 1-phosphate + ATP + H(+) = ADP-alpha-D-glucose + diphosphate. The protein operates within glycan biosynthesis; glycogen biosynthesis. Allosterically activated by fructose-1,6-bisphosphate (F16BP) and inhibited by AMP. Functionally, involved in the biosynthesis of ADP-glucose, a building block required for the elongation reactions to produce glycogen. Catalyzes the reaction between ATP and alpha-D-glucose 1-phosphate (G1P) to produce pyrophosphate and ADP-Glc. The chain is Glucose-1-phosphate adenylyltransferase from Cronobacter sakazakii (strain ATCC BAA-894) (Enterobacter sakazakii).